Consider the following 79-residue polypeptide: CDC42 small effector protein 1 (79 aa).

2 S-palmitoyl cysteine lipidation sites follow: cysteine 10 and cysteine 11. The CRIB domain maps to 30–43 (IGEPMNFVHLTHIG). Residues 41-79 (HIGSGDMGASDGLPRAGGVQEQMRSKCGRDRQWSNSGVL) are disordered. The segment covering 63 to 72 (MRSKCGRDRQ) has biased composition (basic and acidic residues).

The protein belongs to the CDC42SE/SPEC family.

The protein resides in the cytoplasm. It is found in the cytoskeleton. The protein localises to the cell membrane. In terms of biological role, probably involved in the organization of the actin cytoskeleton by acting downstream of CDC42, inducing actin filament assembly. The protein is CDC42 small effector protein 1 (cdc42se1) of Xenopus tropicalis (Western clawed frog).